The primary structure comprises 80 residues: Cell division activator CedA (80 aa).

This sequence belongs to the CedA family.

Its function is as follows. Activates the cell division inhibited by chromosomal DNA over-replication. This is Cell division activator CedA from Escherichia coli O1:K1 / APEC.